A 173-amino-acid polypeptide reads, in one-letter code: Glucagon family neuropeptides (173 aa).

The N-terminal stretch at 1 to 22 (MSSKATLALLIYGIIMHYSVYS) is a signal peptide. A propeptide spanning residues 23 to 80 (SPLGLNYPNLRLENEVYDEDGNSLPALAFDSDQIAIRSPPSVADDLYTLYYPPEKGTE) is cleaved from the precursor. K166 carries the lysine amide modification. A propeptide spanning residues 170–173 (LGYL) is cleaved from the precursor.

Belongs to the glucagon family.

The protein localises to the secreted. Primary role of GHRH is to release GH from the pituitary. In terms of biological role, PACAP plays pivotal roles as a neurotransmitter and/or a neuromodulator. The protein is Glucagon family neuropeptides of Oncorhynchus nerka (Sockeye salmon).